Reading from the N-terminus, the 357-residue chain is Glutamate 5-kinase (357 aa).

K7 is an ATP binding site. Residues S43, D130, and N142 each coordinate substrate. Position 162–163 (162–163) interacts with ATP; that stretch reads TD. A PUA domain is found at 270–347; the sequence is QGELTLDAGA…PAAGPSPVVV (78 aa).

This sequence belongs to the glutamate 5-kinase family.

It localises to the cytoplasm. It catalyses the reaction L-glutamate + ATP = L-glutamyl 5-phosphate + ADP. The protein operates within amino-acid biosynthesis; L-proline biosynthesis; L-glutamate 5-semialdehyde from L-glutamate: step 1/2. Functionally, catalyzes the transfer of a phosphate group to glutamate to form L-glutamate 5-phosphate. In Parasynechococcus marenigrum (strain WH8102), this protein is Glutamate 5-kinase.